A 415-amino-acid chain; its full sequence is Multifunctional CCA protein (415 aa).

ATP-binding residues include Gly8 and Arg11. CTP contacts are provided by Gly8 and Arg11. Residues Asp21 and Asp23 each contribute to the Mg(2+) site. Arg91, Arg143, and Arg146 together coordinate ATP. Residues Arg91, Arg143, and Arg146 each contribute to the CTP site. The 102-residue stretch at 232–333 folds into the HD domain; it reads TGVHVMMVID…VRLLERCDAL (102 aa).

The protein belongs to the tRNA nucleotidyltransferase/poly(A) polymerase family. Bacterial CCA-adding enzyme type 1 subfamily. As to quaternary structure, monomer. Can also form homodimers and oligomers. Mg(2+) serves as cofactor. Ni(2+) is required as a cofactor.

It carries out the reaction a tRNA precursor + 2 CTP + ATP = a tRNA with a 3' CCA end + 3 diphosphate. The catalysed reaction is a tRNA with a 3' CCA end + 2 CTP + ATP = a tRNA with a 3' CCACCA end + 3 diphosphate. Its function is as follows. Catalyzes the addition and repair of the essential 3'-terminal CCA sequence in tRNAs without using a nucleic acid template. Adds these three nucleotides in the order of C, C, and A to the tRNA nucleotide-73, using CTP and ATP as substrates and producing inorganic pyrophosphate. tRNA 3'-terminal CCA addition is required both for tRNA processing and repair. Also involved in tRNA surveillance by mediating tandem CCA addition to generate a CCACCA at the 3' terminus of unstable tRNAs. While stable tRNAs receive only 3'-terminal CCA, unstable tRNAs are marked with CCACCA and rapidly degraded. The polypeptide is Multifunctional CCA protein (Cupriavidus taiwanensis (strain DSM 17343 / BCRC 17206 / CCUG 44338 / CIP 107171 / LMG 19424 / R1) (Ralstonia taiwanensis (strain LMG 19424))).